A 347-amino-acid polypeptide reads, in one-letter code: Membrane progestin receptor gamma-B (347 aa).

Topologically, residues 1–52 (MLSLIKLQRVFNVHQVPKAFHEDGIISGYRHPRSSATECVWSLFQLTNETLN) are cytoplasmic. The chain crosses the membrane as a helical span at residues 53 to 73 (VWTHFLPTWYFLWKLMTVLLM). The Extracellular segment spans residues 74–81 (EDVWNEAY). Residues 82–102 (TWPLLVFLFSCCVYPLASSCA) form a helical membrane-spanning segment. Residues 103–114 (HTFSSMSTRARH) are Cytoplasmic-facing. Residues 115-135 (ICYFFDYGALSFYSLGSAISY) traverse the membrane as a helical segment. The Extracellular portion of the chain corresponds to 136–138 (SAY). Residues 139–159 (VFPDAWLSSSFHAYYISVAVF) traverse the membrane as a helical segment. The Cytoplasmic portion of the chain corresponds to 160 to 201 (NTVLSTSLACYSRLGLPLLHYSHDIVERFSERQCPRMSKVLR). The chain crosses the membrane as a helical span at residues 202–222 (ILAFAYPYLFDNIPLFYRLFV). At 223 to 235 (CVGEGCTDNEANS) the chain is on the extracellular side. A helical membrane pass occupies residues 236-256 (VHVQHTLLAFLTSFLFATHLP). Residues 257–314 (ERLAPGRFDYIGHSHQLFHVCAIIGTHFQMKAIEMDMGLRRSQLLASAPAISFNNTIG) lie on the Cytoplasmic side of the membrane. Residues 315-335 (AALLCVSVSLGIICVYSLPLL) form a helical membrane-spanning segment. At 336 to 347 (YSSNPKNTANKE) the chain is on the extracellular side.

This sequence belongs to the ADIPOR family.

The protein resides in the membrane. Steroid membrane receptor. Binds progesterone. May be involved in oocyte maturation. The sequence is that of Membrane progestin receptor gamma-B from Danio rerio (Zebrafish).